We begin with the raw amino-acid sequence, 1974 residues long: MNEDTNKERGTIGTVQWRWGERLGEILREIKNSHYFFFFDSFFDSWTQFNSVRSFIPIFFHQERFLKLADPRIWSILLSRTQGSTQGSTSITIKGVILFKGVILFVVAALIYRINNRNMVESKTLYLRGLLPIPMNSIGPRNDTLEESVGSSNINRLIVSLLYLPKGKRISESSFLNPKESTFLNPKESTWVLPITKKSSMPWGSRWWRNWIGKKRDSSQLKGSSYQSRDHLDSISNEDSEYHNQREIPLPEERKIEEFLENPTRSVRSFFSDRWSELHLGSNPTERSTRDQKLLKKQQDLSFVPSRRSEKKEMVHIFKIITYLQNTVSIHPISSDPGCDRVPKDESDMDSSNKISFLNKNPFSEERFQEMANRFTLSITEPDLVYPKGSRFCNESIYRRIIKKWVPRGNVLENLKRTQIVVFVSNNIMEAVNQYRLIRNLIQIQYSTYGYIRNVLNRFFLMNRSDRNFEYGIQRDQIGKGTLNHRTLMKYMINQHLSNFFLKKSPFDSLIVIEKSKNRDPFAYRYKWSNGSKNFQEHLEHFLSEQKSRLEIAFDQFQRNYDKPLPLLLESIASIGLQIVHLKKWKPFLLDDHDTSRKMIDSFHTRNNRRKSFEKTDSYFSMIFDNQDNWLNPVKPFHRSSLISSFFKANRLRFWNNPHHFCFYSNTRFPFSVEKARISNYDFTYGQFLNILFIRNKIFSLCVGKKKHAFGGRDTISPIESQVSNIFIPNYFPSRTIYSIADISGTPLTEEEIVNLERTYCQPLSVSDRNLSDSEGKNLNQYLNFNSSMRLIPTEKDFPWKKPEKRKKRSQKRKKQSPCLPCLLCLCLKKGVEKGEMDRRDSAFSFLSDWKDLFQTYMPWFLTSTGYKHLNGIFLEPFSDLLPILTSSLSSCLSSSLSSSLSSSLSSSLSSLSSSLSSSLSSSLSSSLSSSLSSSLSSSLSSSLSSSLKFVSTFHDSMHEVGISWQILQIELQLRLFHLSHWKWAFQFQWDRLNKILNWINWISEISRKCMYSRLLLEATGMIHGKNESPLIPTHLRSVNVRELLYSILFLLLLAGYLVHTHLVFVSRAFSELQTEFKKLKPFLIPSSRMELEELLDAYPTSEPNPFEFELVKSIRSKKKYWNINLIDFIPHRITLSRKMSHLSHTSKELYSLIRKRENVNIKNANEDGKIDSWVVNSDLFVEEEFFHLLYDRTFMLTTKKSIDPILWSLTHSDHLSTHLSKNDSGYQMIEQPGAIYLRYLVDIHKKSLWNYEFNTSCLAEKRVFLAHYQTITYSQTSCGTNTFHFPSHGKPFSLRLLSPSRGVLVIGSIGTGRSYLVKHLATNSHLPFIRLAVSELLNNNPKFRWIEPEDSWPVFDDLLEHSAYYENRVGDGRDYIIDTIDASDDIDIDIVARGDIDFDKEEELLTRESDEEKKNPVRVQEKYRAEQFEEDLELAKIISPCIIWIPNIHDLNLRESTSLAAGLFVNKYSERCSTRDILVIASTHIPQKVDPSLISTNRLNRCIKVRRFFIPQKEKHVFTLLYTRGFHPHLEKNAFGSITLGSSAQDLRPLINDALLIGISQRKSIIDTNTIRCALHRETWEFQSHPKWVPNSQILFYQIGRAVVQKVLLSNCLSNYLIDPLSIYMKKRSFAGGTEGDSSLYKWYFELGTSLKLVTILLYLLSCSAGSVARDLCFLPGEDRIKLFENEMDSTLFHELLLILLEVLALESPLMGSSRTEKDCSQFDNDRVPFPFRPEPRKLLAIQRFLSEKEEWELAEGKEEGLLQPPQEIEGHIVSAPKIWRPWFCLLDGLDRPVEFLELGYPYCYGYRSFEGKQILFDKEDELEENDSEFLQSFIPRSSDEHGFFKLNQFIWDPPDPLFLLSTDEFPGSVFSYRELFADEELRITKTKLRTFRTRWLSKKAQKGRLELLINRQRWLRPNSDESEDSLYSQILSEIFEYLKNLFLSKRGLLDQTRKVLFRKRWVFPDEMHIFFM.

The tract at residues 219 to 246 (SQLKGSSYQSRDHLDSISNEDSEYHNQR) is disordered. ATP is bound at residue 1308–1315 (GSIGTGRS).

The protein belongs to the Ycf2 family.

The protein localises to the plastid. It is found in the chloroplast stroma. Probable ATPase of unknown function. Its presence in a non-photosynthetic plant (Epifagus virginiana) and experiments in tobacco indicate that it has an essential function which is probably not related to photosynthesis. This is Protein Ycf2 from Jasminum nudiflorum (Winter jasmine).